Here is a 625-residue protein sequence, read N- to C-terminus: Mesothelin (625 aa).

A signal peptide spans 1-35 (MALPTAQPLLGSCGSPICSRSFLLLLLSLGWLPLL). S202 is modified (phosphoserine). An intrachain disulfide couples C304 to C328. 3 N-linked (GlcNAc...) asparagine glycosylation sites follow: N390, N488, and N517. S600 is lipidated: GPI-anchor amidated serine. Residues 601-625 (SGAPLLGPGFVFAWIPALLSALRLS) constitute a propeptide, removed in mature form.

This sequence belongs to the mesothelin family. As to quaternary structure, interacts with MUC16. Proteolytically cleaved by a furin-like convertase to generate megakaryocyte-potentiating factor (MPF), and the cleaved form of mesothelin. As to expression, specifically expressed in lung. Overexpressed in hereditary renal carcinoma developed by Eker rats.

It is found in the cell membrane. The protein resides in the golgi apparatus. It localises to the secreted. Functionally, membrane-anchored forms may play a role in cellular adhesion. Megakaryocyte-potentiating factor (MPF) may potentiate megakaryocyte colony formation. The chain is Mesothelin (Msln) from Rattus norvegicus (Rat).